Consider the following 255-residue polypeptide: 3-deoxy-manno-octulosonate cytidylyltransferase (255 aa).

It belongs to the KdsB family.

The protein resides in the cytoplasm. It catalyses the reaction 3-deoxy-alpha-D-manno-oct-2-ulosonate + CTP = CMP-3-deoxy-beta-D-manno-octulosonate + diphosphate. It participates in nucleotide-sugar biosynthesis; CMP-3-deoxy-D-manno-octulosonate biosynthesis; CMP-3-deoxy-D-manno-octulosonate from 3-deoxy-D-manno-octulosonate and CTP: step 1/1. Its pathway is bacterial outer membrane biogenesis; lipopolysaccharide biosynthesis. Functionally, activates KDO (a required 8-carbon sugar) for incorporation into bacterial lipopolysaccharide in Gram-negative bacteria. In Glaesserella parasuis serovar 5 (strain SH0165) (Haemophilus parasuis), this protein is 3-deoxy-manno-octulosonate cytidylyltransferase.